The following is a 159-amino-acid chain: Putative pre-16S rRNA nuclease (159 aa).

This sequence belongs to the YqgF nuclease family.

The protein resides in the cytoplasm. In terms of biological role, could be a nuclease involved in processing of the 5'-end of pre-16S rRNA. This Thermobifida fusca (strain YX) protein is Putative pre-16S rRNA nuclease.